The sequence spans 202 residues: IMP cyclohydrolase (202 aa).

Residues 29–52 (VQRDGTVTVEPTPDAPETDNPYIS) form a disordered region.

It belongs to the archaeal IMP cyclohydrolase family.

It catalyses the reaction IMP + H2O = 5-formamido-1-(5-phospho-D-ribosyl)imidazole-4-carboxamide. It participates in purine metabolism; IMP biosynthesis via de novo pathway; IMP from 5-formamido-1-(5-phospho-D-ribosyl)imidazole-4-carboxamide: step 1/1. Catalyzes the cyclization of 5-formylamidoimidazole-4-carboxamide ribonucleotide to IMP. The chain is IMP cyclohydrolase from Haloarcula marismortui (strain ATCC 43049 / DSM 3752 / JCM 8966 / VKM B-1809) (Halobacterium marismortui).